The following is a 471-amino-acid chain: Putative multidrug resistance protein MdtD (471 aa).

Residues 1 to 11 are Periplasmic-facing; it reads MTDLPDSTRWQ. A helical transmembrane segment spans residues 12–32; that stretch reads LWIVAFGFFMQSLDTTIVNTA. At 33-48 the chain is on the cytoplasmic side; sequence LPSMAQSLGESPLHMH. A helical transmembrane segment spans residues 49–69; that stretch reads MVIVSYVLTVAVMLPASGWLA. The Periplasmic portion of the chain corresponds to 70-76; sequence DKVGVRN. The helical transmembrane segment at 77–97 threads the bilayer; sequence IFFTAIVLFTLGSLFCALSGT. Residues 98–101 lie on the Cytoplasmic side of the membrane; that stretch reads LNEL. The chain crosses the membrane as a helical span at residues 102 to 124; that stretch reads LLARALQGVGGAMMVPVGRLTVM. The Periplasmic segment spans residues 125 to 137; the sequence is KIVPREQYMAAMT. The helical transmembrane segment at 138 to 158 threads the bilayer; sequence FVTLPGQVGPLLGPALGGLLV. The Cytoplasmic segment spans residues 159-164; the sequence is EYASWH. Residues 165-185 traverse the membrane as a helical segment; it reads WIFLINIPVGIIGAIATLMLM. At 186–196 the chain is on the periplasmic side; the sequence is PNYTMQTRRFD. A helical transmembrane segment spans residues 197-217; it reads LSGFLLLAVGMAVLTLALDGS. Over 218 to 224 the chain is Cytoplasmic; the sequence is KGTGLSP. Residues 225 to 245 traverse the membrane as a helical segment; it reads LAIAGLVAVGVVALVLYLLHA. Residues 246–262 lie on the Periplasmic side of the membrane; the sequence is RNNNRALFSLKLFRTRT. Residues 263–283 form a helical membrane-spanning segment; that stretch reads FSLGLAGSFAGRIGSGMLPFM. The Cytoplasmic portion of the chain corresponds to 284 to 285; sequence TP. A helical transmembrane segment spans residues 286–306; it reads VFLQIGLGFSPFHAGLMMIPM. The Periplasmic portion of the chain corresponds to 307 to 341; that stretch reads VLGSMGMKRIVVQVVNRFGYRRVLVATTLGLSLVT. The chain crosses the membrane as a helical span at residues 342 to 362; sequence LLFMTTALLGWYYVLPFVLFL. Residues 363 to 395 are Cytoplasmic-facing; the sequence is QGMVNSTRFSSMNTLTLKDLPDNLASSGNSLLS. A helical membrane pass occupies residues 396-416; the sequence is MIMQLSMSIGVTIAGLLLGLF. At 417–430 the chain is on the periplasmic side; that stretch reads GSQHVSIDSGTTQT. A helical membrane pass occupies residues 431 to 451; that stretch reads VFMYTWLSMALIIALPAFIFA. Residues 452 to 471 are Cytoplasmic-facing; it reads RVPNDTHQNVAISRRKRSAQ.

It belongs to the major facilitator superfamily. TCR/Tet family.

The protein localises to the cell inner membrane. The chain is Putative multidrug resistance protein MdtD from Escherichia coli (strain 55989 / EAEC).